A 336-amino-acid polypeptide reads, in one-letter code: Spore photoproduct lyase (336 aa).

The Radical SAM core domain occupies 74 to 305 (CKPSANYQLP…KFGQFGYGKY (232 aa)). Residues Cys-88, Cys-92, and Cys-95 each coordinate [4Fe-4S] cluster. Residues 215-232 (ESAYNILNSGYKTGFIVG) constitute a DNA-binding region (H-T-H motif).

The protein belongs to the radical SAM superfamily. SPL family. As to quaternary structure, monomer or homodimer. The cofactor is [4Fe-4S] cluster. Requires S-adenosyl-L-methionine as cofactor.

It catalyses the reaction (5R)-5,6-dihydro-5-(thymidin-7-yl)thymidine in DNA = a thymidine dimer in DNA. In terms of biological role, involved in repair of UV radiation-induced DNA damage during spore germination. Can repair thymine dimer 5-thyminyl-5,6-dihydrothymine (known as spore photoproduct (SP)) by in situ monomerization of SP to two thymines. This chain is Spore photoproduct lyase (splB), found in Clostridium acetobutylicum (strain ATCC 824 / DSM 792 / JCM 1419 / IAM 19013 / LMG 5710 / NBRC 13948 / NRRL B-527 / VKM B-1787 / 2291 / W).